The chain runs to 185 residues: Threonylcarbamoyl-AMP synthase (185 aa).

A YrdC-like domain is found at 3-185 (EQAPDEVQEI…VDAISGKVLR (183 aa)).

Belongs to the SUA5 family. TsaC subfamily.

It localises to the cytoplasm. It catalyses the reaction L-threonine + hydrogencarbonate + ATP = L-threonylcarbamoyladenylate + diphosphate + H2O. Functionally, required for the formation of a threonylcarbamoyl group on adenosine at position 37 (t(6)A37) in tRNAs that read codons beginning with adenine. Catalyzes the conversion of L-threonine, HCO(3)(-)/CO(2) and ATP to give threonylcarbamoyl-AMP (TC-AMP) as the acyladenylate intermediate, with the release of diphosphate. The protein is Threonylcarbamoyl-AMP synthase of Shewanella sediminis (strain HAW-EB3).